A 117-amino-acid polypeptide reads, in one-letter code: Large ribosomal subunit protein bL19 (117 aa).

This sequence belongs to the bacterial ribosomal protein bL19 family.

In terms of biological role, this protein is located at the 30S-50S ribosomal subunit interface and may play a role in the structure and function of the aminoacyl-tRNA binding site. This Vibrio campbellii (strain ATCC BAA-1116) protein is Large ribosomal subunit protein bL19.